The sequence spans 1417 residues: DNA-directed RNA polymerase subunit beta' (1417 aa).

Residues C68, C70, C83, and C86 each contribute to the Zn(2+) site. The Mg(2+) site is built by D458, D460, and D462. 4 residues coordinate Zn(2+): C811, C884, C891, and C894.

The protein belongs to the RNA polymerase beta' chain family. As to quaternary structure, the RNAP catalytic core consists of 2 alpha, 1 beta, 1 beta' and 1 omega subunit. When a sigma factor is associated with the core the holoenzyme is formed, which can initiate transcription. Requires Mg(2+) as cofactor. Zn(2+) is required as a cofactor.

The enzyme catalyses RNA(n) + a ribonucleoside 5'-triphosphate = RNA(n+1) + diphosphate. DNA-dependent RNA polymerase catalyzes the transcription of DNA into RNA using the four ribonucleoside triphosphates as substrates. The polypeptide is DNA-directed RNA polymerase subunit beta' (Francisella tularensis subsp. novicida (strain U112)).